Here is a 517-residue protein sequence, read N- to C-terminus: U3 small nucleolar RNA-associated protein 15 homolog (517 aa).

WD repeat units follow at residues 36 to 75 (KEFG…PIRN), 78 to 117 (RFHD…SLRQ), 120 to 159 (GHSK…ELSS), 162 to 202 (EHTD…SVMT), 204 to 242 (QHGQ…QQLV), 246 to 285 (NHHK…HNFD), and 287 to 324 (ASSI…EKEA).

As to quaternary structure, part of the small subunit (SSU) processome, composed of more than 70 proteins and the RNA chaperone small nucleolar RNA (snoRNA) U3. May be a component of the proposed t-UTP subcomplex of the ribosomal small subunit (SSU) processome.

Its subcellular location is the nucleus. It localises to the nucleolus. Functionally, ribosome biogenesis factor. Involved in nucleolar processing of pre-18S ribosomal RNA. Required for optimal pre-ribosomal RNA transcription by RNA polymerase I. Part of the small subunit (SSU) processome, first precursor of the small eukaryotic ribosomal subunit. During the assembly of the SSU processome in the nucleolus, many ribosome biogenesis factors, an RNA chaperone and ribosomal proteins associate with the nascent pre-rRNA and work in concert to generate RNA folding, modifications, rearrangements and cleavage as well as targeted degradation of pre-ribosomal RNA by the RNA exosome. This is U3 small nucleolar RNA-associated protein 15 homolog (utp15) from Danio rerio (Zebrafish).